The following is a 358-amino-acid chain: D-xylulose reductase A (358 aa).

Zn(2+)-binding residues include Cys47, His72, and Glu73. 182-187 (GAGPVG) serves as a coordination point for NAD(+).

It belongs to the zinc-containing alcohol dehydrogenase family. Zn(2+) serves as cofactor.

It catalyses the reaction xylitol + NAD(+) = D-xylulose + NADH + H(+). It functions in the pathway carbohydrate degradation; L-arabinose degradation via L-arabinitol; D-xylulose 5-phosphate from L-arabinose (fungal route): step 4/5. Its function is as follows. Xylitol dehydrogenase which catalyzes the conversion of xylitol to D-xylulose. Xylose is a major component of hemicelluloses such as xylan. Most fungi utilize D-xylose via three enzymatic reactions, xylose reductase (XR), xylitol dehydrogenase (XDH), and xylulokinase, to form xylulose 5-phosphate, which enters pentose phosphate pathway. This chain is D-xylulose reductase A (xdhA), found in Aspergillus oryzae (strain ATCC 42149 / RIB 40) (Yellow koji mold).